Consider the following 355-residue polypeptide: Phenylalanine--tRNA ligase alpha subunit (355 aa).

Glu-273 contacts Mg(2+).

This sequence belongs to the class-II aminoacyl-tRNA synthetase family. Phe-tRNA synthetase alpha subunit type 1 subfamily. As to quaternary structure, tetramer of two alpha and two beta subunits. It depends on Mg(2+) as a cofactor.

It localises to the cytoplasm. The enzyme catalyses tRNA(Phe) + L-phenylalanine + ATP = L-phenylalanyl-tRNA(Phe) + AMP + diphosphate + H(+). The chain is Phenylalanine--tRNA ligase alpha subunit from Bifidobacterium longum subsp. infantis (strain ATCC 15697 / DSM 20088 / JCM 1222 / NCTC 11817 / S12).